A 285-amino-acid polypeptide reads, in one-letter code: Tetraspanin-3 (285 aa).

Topologically, residues 1-6 (MRTSNH) are cytoplasmic. Residues 7–27 (LIGLVNFLTFLLSIPILGGGI) form a helical membrane-spanning segment. The Extracellular segment spans residues 28-43 (WLSSRANSTDCLRFLQ). N-linked (GlcNAc...) asparagine glycosylation is present at Asn-34. A helical membrane pass occupies residues 44-64 (WPLIVIGISIMVVSLAGFAGA). Topologically, residues 65–71 (CYRNKFL) are cytoplasmic. Residues 72-92 (MWLYLVVMLLIIAALIGFIIF) form a helical membrane-spanning segment. Topologically, residues 93 to 235 (AYAVTDKGSG…LGSLKKSWRK (143 aa)) are extracellular. Asn-187 carries an N-linked (GlcNAc...) asparagine glycan. The chain crosses the membrane as a helical span at residues 236–256 (VSVINIVVLIILVIFYVIAYA). Topologically, residues 257-285 (AYRNVKRIDNDEPAGEARMTKSHPSHFHL) are cytoplasmic.

This sequence belongs to the tetraspanin (TM4SF) family.

Its subcellular location is the cell membrane. May be involved in the regulation of cell differentiation. The polypeptide is Tetraspanin-3 (TET3) (Arabidopsis thaliana (Mouse-ear cress)).